Consider the following 561-residue polypeptide: Putative transport protein DNO_0009 (561 aa).

5 helical membrane passes run 4–24 (VAITICILSLVASLGLWLGNI), 29–49 (VGLSIGGVLFGGIIISHIMNL), 74–94 (FGLILFVYTIGIQVGPGFFAS), 104–124 (AFAALIVLLGGLCSVILYYLF), and 166–186 (MGYAIAYPFGIIGVLLAMWLI). 2 RCK C-terminal domains span residues 198–283 (LQFF…ILGE) and 285–369 (AGHE…LIGN). The next 6 helical transmembrane spans lie at 379 to 399 (MLPVFIGIGLGVLLGSIPIYL), 411 to 433 (AGGPLVVALVLARIGSIGKLYWF), 447 to 467 (IVLFLSVIGIHAGEHFFSTLL), 472 to 492 (FSWICYGAIITLLPLLIAGII), 501 to 521 (YLTICGLLAGAMTDTPALAFA), and 538 to 558 (VYPLTTFLRIMLPQLIAVLLW).

The protein belongs to the AAE transporter (TC 2.A.81) family. YidE subfamily.

The protein resides in the cell membrane. In Dichelobacter nodosus (strain VCS1703A), this protein is Putative transport protein DNO_0009.